The primary structure comprises 250 residues: Urease accessory protein UreD (250 aa).

The protein belongs to the UreD family. UreD, UreF and UreG form a complex that acts as a GTP-hydrolysis-dependent molecular chaperone, activating the urease apoprotein by helping to assemble the nickel containing metallocenter of UreC. The UreE protein probably delivers the nickel.

Its subcellular location is the cytoplasm. Its function is as follows. Required for maturation of urease via the functional incorporation of the urease nickel metallocenter. In Aliarcobacter butzleri (strain RM4018) (Arcobacter butzleri), this protein is Urease accessory protein UreD.